A 511-amino-acid polypeptide reads, in one-letter code: 2,3-bisphosphoglycerate-independent phosphoglycerate mutase (511 aa).

Residues Asp12 and Ser62 each coordinate Mn(2+). Ser62 functions as the Phosphoserine intermediate in the catalytic mechanism. Residues His123, 153–154, Arg185, Arg191, 260–263, and Lys333 each bind substrate; these read RD and RPDR. Mn(2+) contacts are provided by Asp400, His404, Asp441, His442, and His460.

This sequence belongs to the BPG-independent phosphoglycerate mutase family. As to quaternary structure, monomer. Mn(2+) is required as a cofactor.

It carries out the reaction (2R)-2-phosphoglycerate = (2R)-3-phosphoglycerate. The protein operates within carbohydrate degradation; glycolysis; pyruvate from D-glyceraldehyde 3-phosphate: step 3/5. In terms of biological role, catalyzes the interconversion of 2-phosphoglycerate and 3-phosphoglycerate. This is 2,3-bisphosphoglycerate-independent phosphoglycerate mutase from Clostridium novyi (strain NT).